A 338-amino-acid chain; its full sequence is Putative peptide import ATP-binding protein BruAb2_0796 (338 aa).

One can recognise an ABC transporter domain in the interval 7 to 263 (LDIEGLRTVF…PRHPYTMGLL (257 aa)). An ATP-binding site is contributed by 43–50 (GESGSGKS).

It belongs to the ABC transporter superfamily. As to quaternary structure, the complex is composed of two ATP-binding proteins (BruAb2_0796 and BruAb2_0797), two transmembrane proteins (BruAb2_0794) and a solute-binding protein (BruAb2_0792).

It is found in the cell inner membrane. Functionally, probably part of an ABC transporter complex that could be involved in peptide import. Probably responsible for energy coupling to the transport system. This Brucella abortus biovar 1 (strain 9-941) protein is Putative peptide import ATP-binding protein BruAb2_0796.